We begin with the raw amino-acid sequence, 265 residues long: uncharacterized protein (265 aa).

This is an uncharacterized protein from Saccharolobus islandicus (Sulfolobus islandicus).